Consider the following 586-residue polypeptide: Aspartate--tRNA(Asp/Asn) ligase (586 aa).

L-aspartate is bound at residue E172. The segment at 196-199 (QLYK) is aspartate. Residue R218 participates in L-aspartate binding. Residues 218 to 220 (RDE) and Q227 each bind ATP. L-aspartate is bound at residue H446. E480 serves as a coordination point for ATP. Residue R487 coordinates L-aspartate. 532-535 (GIDR) is a binding site for ATP.

The protein belongs to the class-II aminoacyl-tRNA synthetase family. Type 1 subfamily. As to quaternary structure, homodimer.

The protein resides in the cytoplasm. The enzyme catalyses tRNA(Asx) + L-aspartate + ATP = L-aspartyl-tRNA(Asx) + AMP + diphosphate. Its function is as follows. Aspartyl-tRNA synthetase with relaxed tRNA specificity since it is able to aspartylate not only its cognate tRNA(Asp) but also tRNA(Asn). Reaction proceeds in two steps: L-aspartate is first activated by ATP to form Asp-AMP and then transferred to the acceptor end of tRNA(Asp/Asn). The polypeptide is Aspartate--tRNA(Asp/Asn) ligase (Borrelia garinii subsp. bavariensis (strain ATCC BAA-2496 / DSM 23469 / PBi) (Borreliella bavariensis)).